The sequence spans 490 residues: uncharacterized protein (490 aa).

Residues Val27–Ile47 traverse the membrane as a helical segment.

Its subcellular location is the membrane. This is an uncharacterized protein from Borreliella burgdorferi (strain ATCC 35210 / DSM 4680 / CIP 102532 / B31) (Borrelia burgdorferi).